Consider the following 330-residue polypeptide: Aspartate--ammonia ligase (330 aa).

This sequence belongs to the class-II aminoacyl-tRNA synthetase family. AsnA subfamily.

It localises to the cytoplasm. The catalysed reaction is L-aspartate + NH4(+) + ATP = L-asparagine + AMP + diphosphate + H(+). Its pathway is amino-acid biosynthesis; L-asparagine biosynthesis; L-asparagine from L-aspartate (ammonia route): step 1/1. This is Aspartate--ammonia ligase from Shigella boydii serotype 18 (strain CDC 3083-94 / BS512).